The primary structure comprises 678 residues: Ribonuclease Z 2, mitochondrial (678 aa).

Residues 1 to 37 (MKASLLVPRRALLFGQLLPPKYSWYSVKRWQSQLTFR) constitute a mitochondrion transit peptide.

The protein belongs to the RNase Z family. The cofactor is Zn(2+).

Its subcellular location is the mitochondrion. It localises to the cytoplasm. The enzyme catalyses Endonucleolytic cleavage of RNA, removing extra 3' nucleotides from tRNA precursor, generating 3' termini of tRNAs. A 3'-hydroxy group is left at the tRNA terminus and a 5'-phosphoryl group is left at the trailer molecule.. In terms of biological role, zinc phosphodiesterase, which displays some tRNA 3'-processing endonuclease activity. May be involved in tRNA maturation, by removing a 3'-trailer from precursor tRNA. This is Ribonuclease Z 2, mitochondrial (trz2) from Schizosaccharomyces pombe (strain 972 / ATCC 24843) (Fission yeast).